Reading from the N-terminus, the 307-residue chain is MQIRHFLQFKDFDRLEFEYLFDRTRWIKNEFKQYRRYWPLTDRTLAMIFEKHSTRTRLSFEAGMHQLGGSAIYLSTRDTQLGRGEPVEDAARVISRMVDIITIRTHEHQIIERFAENSRVPVINGLTDEYHPCQILADIFTFIEHRGSITGKTITWIGDSNNVCNTWLQAAEIFDFNVHVSTPPGYEVEPERAGLYGTDHYEQFVSPHDAVKDADLVTTDVWTSMGFEDELDTRKNDFADFCVDAEMMACAKKEALFMHCLPAHRGEEVDAEVIDGPQSVVWDEAENRLHTQKALMEYLLLGRISVR.

Carbamoyl phosphate-binding positions include 53–56, Gln-80, Arg-104, and 131–134; these read STRT and HPCQ. L-ornithine contacts are provided by residues Asn-162, Asp-220, and 224–225; that span reads SM. Carbamoyl phosphate-binding positions include 260–261 and Arg-288; that span reads CL.

It belongs to the aspartate/ornithine carbamoyltransferase superfamily. OTCase family.

It localises to the cytoplasm. The enzyme catalyses carbamoyl phosphate + L-ornithine = L-citrulline + phosphate + H(+). It participates in amino-acid biosynthesis; L-arginine biosynthesis; L-arginine from L-ornithine and carbamoyl phosphate: step 1/3. Its function is as follows. Reversibly catalyzes the transfer of the carbamoyl group from carbamoyl phosphate (CP) to the N(epsilon) atom of ornithine (ORN) to produce L-citrulline. This chain is Ornithine carbamoyltransferase, found in Nitrosomonas eutropha (strain DSM 101675 / C91 / Nm57).